The primary structure comprises 327 residues: MTHLQAGLSPETLEKARLELNENPDTLHQDIQEVRDMVITRPDIGFLRTDDAFILRFLRARKFHHFEAFRLLAQYFEYRQQNLDMFKSFKATDPGIKQALKDGFPGGLANLDHYGRKILVLFAANWDQSRYTLVDILRAILLSLEAMIEDPELQVNGFVLIIDWSNFTFKQASKLTPSMLRLAIEGLQDSFPARFGGIHFVNQPWYIHALYTVIRPFLKEKTRKRIFLHGNNLNSLHQLIHPEILPSEFGGMLPPYDMGTWARTLLDHEYDDDSEYNVDSYSMPVNEVDKELSPKSMKRSQSVVDPTALKRMDKSEEENMQPLLSLD.

A CRAL-TRIO domain is found at 96–257 (IKQALKDGFP…EFGGMLPPYD (162 aa)). Residues 288-327 (VDKELSPKSMKRSQSVVDPTALKRMDKSEEENMQPLLSLD) form a disordered region. Ser325 is subject to Phosphoserine.

Forms a complex with clathrin heavy chain and gamma-adaptin. Expressed in brain with no expression detected in non-neuronal tissues (at protein level).

The protein localises to the golgi apparatus. It is found in the trans-Golgi network membrane. Its subcellular location is the early endosome membrane. It localises to the cytoplasmic vesicle. The protein resides in the clathrin-coated vesicle. In terms of biological role, required for normal morphology of late endosomes and/or lysosomes in neurons. Binds phosphatidylinositol 3,5-bisphosphate (PtdIns(3,5)P2). The chain is Clavesin-2 from Rattus norvegicus (Rat).